We begin with the raw amino-acid sequence, 198 residues long: SOSS complex subunit B2 (198 aa).

The segment at residues 26 to 89 (IVLEIGRVTK…SMWKGCLTLY (64 aa)) is a DNA-binding region (OB). Residues 114 to 198 (EPNPDYRGQQ…ARDPRRAFKR (85 aa)) are disordered. Composition is skewed to polar residues over residues 136–151 (STNTFGPVGNGDQTGP) and 173–188 (LPGTPSSQTVRTTISN).

The protein belongs to the SOSS-B family. SOSS-B2 subfamily. Component of the SOSS complex, composed of SOSS-B (SOSS-B1/NABP2 or SOSS-B2/NABP1), SOSS-A/INTS3 and SOSS-C/INIP. SOSS complexes containing SOSS-B1/NABP2 are more abundant than complexes containing SOSS-B2/NABP1. In terms of tissue distribution, ubiquitous with high expression in the thymus.

The protein localises to the nucleus. Its function is as follows. Component of the SOSS complex, a multiprotein complex that functions downstream of the MRN complex to promote DNA repair and G2/M checkpoint. In the SOSS complex, acts as a sensor of single-stranded DNA that binds to single-stranded DNA, in particular to polypyrimidines. The SOSS complex associates with DNA lesions and influences diverse endpoints in the cellular DNA damage response including cell-cycle checkpoint activation, recombinational repair and maintenance of genomic stability. Required for efficient homologous recombination-dependent repair of double-strand breaks (DSBs) and ATM-dependent signaling pathways. The polypeptide is SOSS complex subunit B2 (Nabp1) (Mus musculus (Mouse)).